The chain runs to 408 residues: Acetate kinase (408 aa).

Asn10 lines the Mg(2+) pocket. Lys17 contacts ATP. Arg96 contacts substrate. Asp153 acts as the Proton donor/acceptor in catalysis. Residues His213–Gly217 and Asp288–Arg290 contribute to the ATP site. Glu393 serves as a coordination point for Mg(2+).

This sequence belongs to the acetokinase family. In terms of assembly, homodimer. Mg(2+) serves as cofactor. Mn(2+) is required as a cofactor.

It localises to the cytoplasm. It catalyses the reaction acetate + ATP = acetyl phosphate + ADP. The protein operates within metabolic intermediate biosynthesis; acetyl-CoA biosynthesis; acetyl-CoA from acetate: step 1/2. In terms of biological role, catalyzes the formation of acetyl phosphate from acetate and ATP. Can also catalyze the reverse reaction. This is Acetate kinase from Borrelia recurrentis (strain A1).